The sequence spans 188 residues: Ribosome-recycling factor (188 aa).

Belongs to the RRF family.

The protein localises to the cytoplasm. Responsible for the release of ribosomes from messenger RNA at the termination of protein biosynthesis. May increase the efficiency of translation by recycling ribosomes from one round of translation to another. This Cereibacter sphaeroides (strain ATCC 17023 / DSM 158 / JCM 6121 / CCUG 31486 / LMG 2827 / NBRC 12203 / NCIMB 8253 / ATH 2.4.1.) (Rhodobacter sphaeroides) protein is Ribosome-recycling factor.